The following is a 339-amino-acid chain: MKDVNDEERIIGAESNEEDETIELSLRPQLLAQYIGQDKVKSEMKIYIKAAKQRDEALDHVLLYGPPGLGKTTLAFVIANEMGVHLKSTSGPAIEKAGDLVALLSELNPGDVLFIDEIHRLAKPVEEVLYSAMEDFYIDIVVGEGQTTHAVHVPLPPFTLIGATTRAGQLSAPLRDRFGIIEHMQYYSIDDLEKIIQRSSVVFNTKIDPEAAIELARRSRGTPRVANRLLKRVRDFAEVKGEEAISLATTKHSLHLLEVDDEGLDQTDRKLLRMMIENYGGGPVGIKTIAANVGEDTDTIEEVYEPYLLQKGFITRTPRGRSVTQKAYLQLGYPPKKAE.

The large ATPase domain (RuvB-L) stretch occupies residues 2–187 (KDVNDEERII…FGIIEHMQYY (186 aa)). ATP is bound by residues Leu26, Arg27, Gly68, Lys71, Thr72, Thr73, 134–136 (EDF), Arg177, Tyr187, and Arg224. Thr72 contacts Mg(2+). A small ATPAse domain (RuvB-S) region spans residues 188–258 (SIDDLEKIIQ…TTKHSLHLLE (71 aa)). A head domain (RuvB-H) region spans residues 261 to 339 (DEGLDQTDRK…QLGYPPKKAE (79 aa)). 2 residues coordinate DNA: Arg316 and Arg321.

Belongs to the RuvB family. As to quaternary structure, homohexamer. Forms an RuvA(8)-RuvB(12)-Holliday junction (HJ) complex. HJ DNA is sandwiched between 2 RuvA tetramers; dsDNA enters through RuvA and exits via RuvB. An RuvB hexamer assembles on each DNA strand where it exits the tetramer. Each RuvB hexamer is contacted by two RuvA subunits (via domain III) on 2 adjacent RuvB subunits; this complex drives branch migration. In the full resolvosome a probable DNA-RuvA(4)-RuvB(12)-RuvC(2) complex forms which resolves the HJ.

Its subcellular location is the cytoplasm. It catalyses the reaction ATP + H2O = ADP + phosphate + H(+). Functionally, the RuvA-RuvB-RuvC complex processes Holliday junction (HJ) DNA during genetic recombination and DNA repair, while the RuvA-RuvB complex plays an important role in the rescue of blocked DNA replication forks via replication fork reversal (RFR). RuvA specifically binds to HJ cruciform DNA, conferring on it an open structure. The RuvB hexamer acts as an ATP-dependent pump, pulling dsDNA into and through the RuvAB complex. RuvB forms 2 homohexamers on either side of HJ DNA bound by 1 or 2 RuvA tetramers; 4 subunits per hexamer contact DNA at a time. Coordinated motions by a converter formed by DNA-disengaged RuvB subunits stimulates ATP hydrolysis and nucleotide exchange. Immobilization of the converter enables RuvB to convert the ATP-contained energy into a lever motion, pulling 2 nucleotides of DNA out of the RuvA tetramer per ATP hydrolyzed, thus driving DNA branch migration. The RuvB motors rotate together with the DNA substrate, which together with the progressing nucleotide cycle form the mechanistic basis for DNA recombination by continuous HJ branch migration. Branch migration allows RuvC to scan DNA until it finds its consensus sequence, where it cleaves and resolves cruciform DNA. The chain is Holliday junction branch migration complex subunit RuvB from Lactobacillus gasseri (strain ATCC 33323 / DSM 20243 / BCRC 14619 / CIP 102991 / JCM 1131 / KCTC 3163 / NCIMB 11718 / NCTC 13722 / AM63).